We begin with the raw amino-acid sequence, 452 residues long: tRNA-2-methylthio-N(6)-dimethylallyladenosine synthase (452 aa).

The MTTase N-terminal domain occupies 3 to 118; sequence KKVFIKTYGC…LPQLLAERER (116 aa). Positions 12, 49, 81, 155, 159, and 162 each coordinate [4Fe-4S] cluster. One can recognise a Radical SAM core domain in the interval 141–379; that stretch reads RVEGASAFVS…QTVINDSIKR (239 aa). Residues 382-445 form the TRAM domain; it reads ESRLGTVQRI…SFTLRGEVVT (64 aa).

It belongs to the methylthiotransferase family. MiaB subfamily. As to quaternary structure, monomer. The cofactor is [4Fe-4S] cluster.

It is found in the cytoplasm. The catalysed reaction is N(6)-dimethylallyladenosine(37) in tRNA + (sulfur carrier)-SH + AH2 + 2 S-adenosyl-L-methionine = 2-methylsulfanyl-N(6)-dimethylallyladenosine(37) in tRNA + (sulfur carrier)-H + 5'-deoxyadenosine + L-methionine + A + S-adenosyl-L-homocysteine + 2 H(+). Catalyzes the methylthiolation of N6-(dimethylallyl)adenosine (i(6)A), leading to the formation of 2-methylthio-N6-(dimethylallyl)adenosine (ms(2)i(6)A) at position 37 in tRNAs that read codons beginning with uridine. This Albidiferax ferrireducens (strain ATCC BAA-621 / DSM 15236 / T118) (Rhodoferax ferrireducens) protein is tRNA-2-methylthio-N(6)-dimethylallyladenosine synthase.